A 333-amino-acid chain; its full sequence is Protoheme IX farnesyltransferase (333 aa).

A run of 7 helical transmembrane segments spans residues 64–84 (LICTLGGGALAAAAAGALNCL), 110–130 (TVFLAAVSCTLAASMLLISGV), 133–153 (LAAGLTLLGLCSYVILYTVIL), 161–181 (IVFGGVAGAIPPLVGASAATG), 189–209 (WLFGLVMLWTPAHFWALAILL), 246–266 (IMGVFALPEGGLLYGIMLLPF), and 287–307 (AKSLFRWSILYMFGICLLLLI).

This sequence belongs to the UbiA prenyltransferase family. Protoheme IX farnesyltransferase subfamily.

It localises to the cell inner membrane. It carries out the reaction heme b + (2E,6E)-farnesyl diphosphate + H2O = Fe(II)-heme o + diphosphate. It participates in porphyrin-containing compound metabolism; heme O biosynthesis; heme O from protoheme: step 1/1. In terms of biological role, converts heme B (protoheme IX) to heme O by substitution of the vinyl group on carbon 2 of heme B porphyrin ring with a hydroxyethyl farnesyl side group. This chain is Protoheme IX farnesyltransferase, found in Prochlorococcus marinus (strain MIT 9312).